A 131-amino-acid chain; its full sequence is Lysozyme C (131 aa).

Residues 2 to 131 form the C-type lysozyme domain; the sequence is KIYEQCELAR…VSQWIKGCKL (130 aa). 4 disulfide bridges follow: Cys-7–Cys-129, Cys-31–Cys-117, Cys-66–Cys-82, and Cys-78–Cys-96. Active-site residues include Glu-36 and Asp-54.

It belongs to the glycosyl hydrolase 22 family. Monomer.

Its subcellular location is the secreted. It catalyses the reaction Hydrolysis of (1-&gt;4)-beta-linkages between N-acetylmuramic acid and N-acetyl-D-glucosamine residues in a peptidoglycan and between N-acetyl-D-glucosamine residues in chitodextrins.. In terms of biological role, lysozymes have primarily a bacteriolytic function; those in tissues and body fluids are associated with the monocyte-macrophage system and enhance the activity of immunoagents. Has strong bacteriolytic activity against M.luteus and V.cholerae, weak bacteriolytic activity against P.aeruginosa and no activity against A.hydrophila. The polypeptide is Lysozyme C (LYZ) (Pelodiscus sinensis (Chinese softshell turtle)).